A 698-amino-acid polypeptide reads, in one-letter code: Polyribonucleotide nucleotidyltransferase (698 aa).

2 residues coordinate Mg(2+): Asp-485 and Asp-491. The region spanning 552-612 (PRVEMMTIPE…SDLKGAKSIV (61 aa)) is the KH domain. The 69-residue stretch at 622-690 (GMVYDGTVKK…KLGRLNLSYV (69 aa)) folds into the S1 motif domain.

This sequence belongs to the polyribonucleotide nucleotidyltransferase family. Mg(2+) is required as a cofactor.

It is found in the cytoplasm. It catalyses the reaction RNA(n+1) + phosphate = RNA(n) + a ribonucleoside 5'-diphosphate. Functionally, involved in mRNA degradation. Catalyzes the phosphorolysis of single-stranded polyribonucleotides processively in the 3'- to 5'-direction. In Treponema denticola (strain ATCC 35405 / DSM 14222 / CIP 103919 / JCM 8153 / KCTC 15104), this protein is Polyribonucleotide nucleotidyltransferase.